We begin with the raw amino-acid sequence, 148 residues long: MVSALKCSLAVAVMISLACSAYAIKCYQCESLTMPKCGLKFEADETLLLDCSRIGPPRYLQNFFPLRNATGCMKKTLESVAGHPQIVRSCYFGDINNIQAGCQSDPSMPFVKQLGCDVCTKDECNGSSSLAPIAGAILLFFGVARLLA.

An N-terminal signal peptide occupies residues 1-23 (MVSALKCSLAVAVMISLACSAYA). 5 disulfide bridges follow: Cys26–Cys72, Cys29–Cys37, Cys51–Cys90, Cys102–Cys116, and Cys119–Cys124. Asn68 carries an N-linked (GlcNAc...) asparagine glycan. Asn125 carries N-linked (GlcNAc...) asparagine glycosylation. The GPI-anchor amidated asparagine moiety is linked to residue Asn125. The propeptide at 126–148 (GSSSLAPIAGAILLFFGVARLLA) is removed in mature form. Residues 128-148 (SSLAPIAGAILLFFGVARLLA) traverse the membrane as a helical segment.

Belongs to the quiver family.

It localises to the cell membrane. It is found in the membrane. Its subcellular location is the perikaryon. The protein resides in the cell projection. The protein localises to the neuron projection. In terms of biological role, necessary for the maintenance of persistent fluctuating activities and suppression of acute evoked activities in abdominal leucokinin-producing (ABLK) neurons to negatively regulate neuron excitability involved in nociceptive (perception of pain) behavioral responses. The sequence is that of UPAR/Ly6 domain-containing protein bero from Drosophila melanogaster (Fruit fly).